The primary structure comprises 121 residues: MIFGIGIDIVELHRIENMLSRQARFPQRILTEAEYARFTLLSDKRKIEFLAGRFAAKEAFSKAYGTGIGKELSFQDIETGNDKAGKPVLACAKLDCATVHVSITHTKEYAAAQVVIERLSR.

Residues Asp8 and Glu58 each contribute to the Mg(2+) site.

This sequence belongs to the P-Pant transferase superfamily. AcpS family. The cofactor is Mg(2+).

It is found in the cytoplasm. It catalyses the reaction apo-[ACP] + CoA = holo-[ACP] + adenosine 3',5'-bisphosphate + H(+). Its function is as follows. Transfers the 4'-phosphopantetheine moiety from coenzyme A to a Ser of acyl-carrier-protein. The sequence is that of Holo-[acyl-carrier-protein] synthase from Bacillus velezensis (strain DSM 23117 / BGSC 10A6 / LMG 26770 / FZB42) (Bacillus amyloliquefaciens subsp. plantarum).